The following is a 706-amino-acid chain: Heat shock protein 75 kDa, mitochondrial (706 aa).

Residues 1–60 (MARELRALLLWGRGLQSALRAPALAGVRRGKPVLHLQKTTVHFRDPTQSLASGISAGQLY) constitute a mitochondrion transit peptide. ATP-binding residues include Asn-121 and Asp-160. Ser-172 bears the Phosphoserine mark. ATP is bound at residue Asn-173. Thr-176 is modified (phosphothreonine). A Phosphoserine modification is found at Ser-196. Position 207 (Phe-207) interacts with ATP. N6-acetyllysine is present on residues Lys-264, Lys-326, and Lys-334. Arg-404 is a binding site for ATP. 3 positions are modified to N6-acetyllysine: Lys-426, Lys-433, and Lys-468. Thr-496 carries the post-translational modification Phosphothreonine. Ser-570 is subject to Phosphoserine.

The protein belongs to the heat shock protein 90 family. In terms of assembly, binds to the intracellular domain of tumor necrosis factor type 1 receptor. Binds to RB1. Interacts with SRC. Interacts with SDHA.

The protein resides in the mitochondrion. It localises to the mitochondrion inner membrane. It is found in the mitochondrion matrix. Its function is as follows. Chaperone that expresses an ATPase activity. Involved in maintaining mitochondrial function and polarization, downstream of PINK1 and mitochondrial complex I. Is a negative regulator of mitochondrial respiration able to modulate the balance between oxidative phosphorylation and aerobic glycolysis. The impact of TRAP1 on mitochondrial respiration is probably mediated by modulation of mitochondrial SRC and inhibition of SDHA. The sequence is that of Heat shock protein 75 kDa, mitochondrial (Trap1) from Rattus norvegicus (Rat).